Here is a 530-residue protein sequence, read N- to C-terminus: Alkyl hydroperoxide reductase subunit F (530 aa).

214–229 (DVLVVGGGPAGSAAAV) lines the FAD pocket. Cysteines 344 and 347 form a disulfide. 356-370 (RVAVIGGGNSGVEAA) contributes to the NAD(+) binding site. 477–487 (TDVPGVFAAGD) is a binding site for FAD.

This sequence belongs to the class-II pyridine nucleotide-disulfide oxidoreductase family. As to quaternary structure, homodimer. It depends on FAD as a cofactor.

Its function is as follows. Serves to protect the cell against DNA damage by alkyl hydroperoxides. It can use either NADH or NADPH as electron donor for direct reduction of redox dyes or of alkyl hydroperoxides when combined with the AhpC protein. The protein is Alkyl hydroperoxide reductase subunit F (ahpF) of Xanthomonas campestris pv. phaseoli.